The sequence spans 73 residues: Large ribosomal subunit protein bL31 (73 aa).

Belongs to the bacterial ribosomal protein bL31 family. Type A subfamily. As to quaternary structure, part of the 50S ribosomal subunit.

Its function is as follows. Binds the 23S rRNA. In Bartonella bacilliformis (strain ATCC 35685 / KC583 / Herrer 020/F12,63), this protein is Large ribosomal subunit protein bL31.